We begin with the raw amino-acid sequence, 647 residues long: Protein arginine N-methyltransferase 7 (647 aa).

2 consecutive SAM-dependent MTase PRMT-type domains span residues 12-332 (EREW…FSLW) and 337-647 (GKDK…SEDS). Residues Glu140 and Glu149 contribute to the active site.

This sequence belongs to the class I-like SAM-binding methyltransferase superfamily. Protein arginine N-methyltransferase family. PRMT7 subfamily.

Functionally, arginine methyltransferase that can both catalyze the formation of omega-N monomethylarginine (MMA) and symmetrical dimethylarginine (sDMA). In Caenorhabditis elegans, this protein is Protein arginine N-methyltransferase 7 (prmt-7).